The sequence spans 142 residues: MMNFRQRMGWIGVGLYLLASVAAVYYIFEISQTYNRLALAQVEKTSGAQAKWPGDASSSSPSSTSWIVTLKTRLLLLPFWVWATIFLLPYLQVFLFLYSCTRADPKTVGYCILPICLAVLCNRHQTFTKASNQISRLQLIDT.

The next 2 helical transmembrane spans lie at 8-28 and 76-96; these read MGWI…YYIF and LLPF…VFLF.

The protein belongs to the LYSET family.

It localises to the golgi apparatus membrane. Functionally, required for mannose-6-phosphate-dependent trafficking of lysosomal enzymes. LYSET bridges GlcNAc-1-phosphate transferase (GNPTAB), to the membrane-bound transcription factor site-1 protease (MBTPS1), thus allowing proteolytic activation of the GNPTAB. GNPTAB is involved in the regulation of M6P-dependent Golgi-to-lysosome trafficking of lysosomal enzymes. LYSET is thus an essential factor for maturation and delivery of lysosomal hydrolases. This is Lysosomal enzyme trafficking factor (tmem251) from Danio rerio (Zebrafish).